The following is a 454-amino-acid chain: MEDYLQDCRAALQESRPLHVVLGNEACDLDSMVSALALAFYLTKTSEAEDIFIPVLNIKRSELPLRGDNVFFLQEVKIAESALIFRDEIDLLALHQAGQLTLILVDHHMLPKSDAALEEAVAEVLDHRPIEQKYCPPCHVSVELVGSCATLVAERILQGAPETLDRQTAALLHGTIILDCVNMDAKIGKATLKDNEYVEKLEALFPDLPKRKDIFDSLQKAKFDVSGLTTEQMLRKDQKTIYRQGTKVAVSAVYMDLEAFLQRSGLLSDLSAFCQDHSYDALVAMAIFFNTHNEPVRQLAIFCPHEALRMTICGVLEQSTSPALKLTPIPSISAHLQAYLQGNTQVSRKKLLPVLQEALSAYLDSMRTPAGQLEAALGMSREQADKELDKASNSLIAGLSQDDEDPPLPPTPMNSLVDECPLDQGLPKLSAEAVFEKCSQISLSQSTRACPSNK.

N-acetylmethionine is present on M1. The Mn(2+) site is built by D28, D30, D106, and D179. Residues 106 to 108 carry the DHH motif motif; the sequence is DHH. Positions 394–421 are essential for homodimerization; sequence SLIAGLSQDDEDPPLPPTPMNSLVDECP. A disordered region spans residues 398–421; it reads GLSQDDEDPPLPPTPMNSLVDECP. S400 bears the Phosphoserine mark. At T411 the chain carries Phosphothreonine. S415 is modified (phosphoserine).

This sequence belongs to the PPase class C family. Prune subfamily. In terms of assembly, homooligomer. Able to homodimerize via its C-terminal domain. Interacts with NME1. Interacts with GSK3; at focal adhesion complexes where paxillin and vinculin are colocalized. Interacts with alpha and beta tubulin. The cofactor is Mn(2+).

It localises to the cytoplasm. Its subcellular location is the nucleus. It is found in the cell junction. The protein resides in the focal adhesion. It catalyses the reaction diphosphate + H2O = 2 phosphate + H(+). With respect to regulation, activated by magnesium ions and inhibited by manganese ions. Inhibited by dipyridamole, moderately sensitive to IBMX and inhibited by vinpocetine. Phosphodiesterase (PDE) that has higher activity toward cAMP than cGMP, as substrate. Plays a role in cell proliferation, migration and differentiation, and acts as a negative regulator of NME1. Plays a role in the regulation of neurogenesis. Involved in the regulation of microtubule polymerization. This chain is Exopolyphosphatase PRUNE1 (Prune1), found in Rattus norvegicus (Rat).